Reading from the N-terminus, the 132-residue chain is Small ribosomal subunit protein uS9 (132 aa).

Belongs to the universal ribosomal protein uS9 family.

This Leptospira borgpetersenii serovar Hardjo-bovis (strain JB197) protein is Small ribosomal subunit protein uS9.